Reading from the N-terminus, the 318-residue chain is Ubiquitin-like domain-containing CTD phosphatase 1 (318 aa).

Residues 3-81 (LSLIIKWGGQ…IMMMGTREES (79 aa)) enclose the Ubiquitin-like domain. Residues 133-294 (PREGKKLLVL…LKLTQYLKEI (162 aa)) enclose the FCP1 homology domain. Asp143, Asp145, and Asp253 together coordinate Mg(2+).

Mg(2+) is required as a cofactor.

It is found in the nucleus. The enzyme catalyses O-phospho-L-seryl-[protein] + H2O = L-seryl-[protein] + phosphate. It carries out the reaction O-phospho-L-threonyl-[protein] + H2O = L-threonyl-[protein] + phosphate. Functionally, dephosphorylates 26S nuclear proteasomes, thereby decreasing their proteolytic activity. Recruited to the 19S regulatory particle of the 26S proteasome where it dephosphorylates 19S component PSMC2 which impairs PSMC2 ATPase activity and disrupts 26S proteasome assembly. Has also been reported to stimulate the proteolytic activity of the 26S proteasome. This is Ubiquitin-like domain-containing CTD phosphatase 1 (UBLCP1) from Gallus gallus (Chicken).